The chain runs to 310 residues: Aspartate carbamoyltransferase catalytic subunit (310 aa).

Arginine 58 and threonine 59 together coordinate carbamoyl phosphate. Residue lysine 87 coordinates L-aspartate. Positions 108, 136, and 139 each coordinate carbamoyl phosphate. Residues arginine 169 and arginine 229 each coordinate L-aspartate. Carbamoyl phosphate contacts are provided by leucine 268 and proline 269.

It belongs to the aspartate/ornithine carbamoyltransferase superfamily. ATCase family. As to quaternary structure, heterododecamer (2C3:3R2) of six catalytic PyrB chains organized as two trimers (C3), and six regulatory PyrI chains organized as three dimers (R2).

The catalysed reaction is carbamoyl phosphate + L-aspartate = N-carbamoyl-L-aspartate + phosphate + H(+). The protein operates within pyrimidine metabolism; UMP biosynthesis via de novo pathway; (S)-dihydroorotate from bicarbonate: step 2/3. In terms of biological role, catalyzes the condensation of carbamoyl phosphate and aspartate to form carbamoyl aspartate and inorganic phosphate, the committed step in the de novo pyrimidine nucleotide biosynthesis pathway. This Leptospira biflexa serovar Patoc (strain Patoc 1 / Ames) protein is Aspartate carbamoyltransferase catalytic subunit.